Here is a 260-residue protein sequence, read N- to C-terminus: Putative [LysW]-aminoadipate/[LysW]-glutamate kinase (260 aa).

Substrate contacts are provided by residues 35–36, R62, and N162; that span reads GG.

Belongs to the acetylglutamate kinase family. LysZ subfamily.

The protein resides in the cytoplasm. It carries out the reaction [amino-group carrier protein]-C-terminal-N-(1,4-dicarboxybutan-1-yl)-L-glutamine + ATP = [amino-group carrier protein]-C-terminal-N-(1-carboxy-5-phosphooxy-5-oxopentan-1-yl)-L-glutamine + ADP. The enzyme catalyses [amino-group carrier protein]-C-terminal-gamma-(L-glutamyl)-L-glutamate + ATP = [amino-group carrier protein]-C-terminal-gamma-(5-phospho-L-glutamyl)-L-glutamate + ADP. It participates in amino-acid biosynthesis; L-lysine biosynthesis via AAA pathway; L-lysine from L-alpha-aminoadipate (Thermus route): step 2/5. The protein operates within amino-acid biosynthesis; L-arginine biosynthesis. Functionally, involved in both the arginine and lysine biosynthetic pathways. Phosphorylates the LysW-bound precursors glutamate (for arginine biosynthesis), respectively alpha-aminoadipate (for lysine biosynthesis). The polypeptide is Putative [LysW]-aminoadipate/[LysW]-glutamate kinase (Pyrobaculum neutrophilum (strain DSM 2338 / JCM 9278 / NBRC 100436 / V24Sta) (Thermoproteus neutrophilus)).